The chain runs to 215 residues: Ribonuclease T (215 aa).

Residues V20–F194 form the Exonuclease domain. Mg(2+)-binding residues include D23, E25, H181, and D186. H181 functions as the Proton donor/acceptor in the catalytic mechanism.

The protein belongs to the RNase T family. As to quaternary structure, homodimer. Mg(2+) is required as a cofactor.

Trims short 3' overhangs of a variety of RNA species, leaving a one or two nucleotide 3' overhang. Responsible for the end-turnover of tRNA: specifically removes the terminal AMP residue from uncharged tRNA (tRNA-C-C-A). Also appears to be involved in tRNA biosynthesis. This is Ribonuclease T from Shigella boydii serotype 4 (strain Sb227).